The sequence spans 176 residues: Ferritin, liver middle subunit (176 aa).

The 150-residue stretch at 7 to 156 (QNYHRDCEAA…DFITNLSRMD (150 aa)) folds into the Ferritin-like diiron domain. Residues E24, E59, H62, E104, and Q138 each coordinate Fe cation.

It belongs to the ferritin family. In liver, forms a heteromer consisting of middle and heavy subunits. The functional molecule forms a roughly spherical shell with a diameter of 12 nm and contains a central cavity into which the insoluble mineral iron core is deposited. Liver (at protein level).

The enzyme catalyses 4 Fe(2+) + O2 + 4 H(+) = 4 Fe(3+) + 2 H2O. In terms of biological role, stores iron in a soluble, non-toxic, readily available form. Important for iron homeostasis. Has ferroxidase activity. Iron is taken up in the ferrous form and deposited as ferric hydroxides after oxidation. The polypeptide is Ferritin, liver middle subunit (Trematomus bernacchii (Emerald rockcod)).